Reading from the N-terminus, the 1169-residue chain is DNA repair protein RAD5 (1169 aa).

An N-acetylserine modification is found at Ser2. Residues Ser20, Ser23, Ser129, and Ser130 each carry the phosphoserine modification. Residues 302 to 317 (MKRRRTEGGNKREKDN) are compositionally biased toward basic and acidic residues. Residues 302–327 (MKRRRTEGGNKREKDNGNFGRTLTET) are disordered. The Helicase ATP-binding domain occupies 519-730 (PILKTMIKGG…YSLVKFLELD (212 aa)). ATP is bound at residue 532–539 (DEMGLGKT). The DEGH box motif lies at 681–684 (DEGH). The RING-type zinc finger occupies 914 to 961 (CSICTTEPMDLDKALFTECGHSFCEKCLFEYIEFQNSKNLGLKCPNCR). In terms of domain architecture, Helicase C-terminal spans 995–1165 (KITALLKELQ…RRKRRIEEIQ (171 aa)).

The protein belongs to the SNF2/RAD54 helicase family. In terms of assembly, homodimer. Interacts with POL30, RAD18, UBC9 and UBC13. The cofactor is Mg(2+). Requires Mn(2+) as cofactor. Ca(2+) is required as a cofactor.

It localises to the cytoplasm. The protein resides in the nucleus. Probable helicase, member of the UBC2/RAD6 epistasis group. Functions with the DNA repair protein RAD18 in error-free postreplication DNA repair. Involved in the maintenance of wild-type rates of instability of simple repetitive sequences such as poly(GT) repeats. Seems to be involved in maintaining a balance which acts in favor of error-prone non-homologous joining during DNA double-strand breaks repairs. Recruits the UBC13-MMS2 dimer to chromatin for DNA repair. The chain is DNA repair protein RAD5 (RAD5) from Saccharomyces cerevisiae (strain ATCC 204508 / S288c) (Baker's yeast).